A 225-amino-acid chain; its full sequence is ATP-dependent dethiobiotin synthetase BioD 1 (225 aa).

Residue Glu-13 to Val-18 participates in ATP binding. Thr-17 contributes to the Mg(2+) binding site. Lys-38 is an active-site residue. Ser-42 is a substrate binding site. Residues Asp-55, Glu-116 to Gly-119, Asn-176 to Asp-177, Pro-205 to Leu-207, and Glu-212 contribute to the ATP site. Residues Asp-55 and Glu-116 each contribute to the Mg(2+) site.

This sequence belongs to the dethiobiotin synthetase family. In terms of assembly, homodimer. Mg(2+) serves as cofactor.

It is found in the cytoplasm. It carries out the reaction (7R,8S)-7,8-diammoniononanoate + CO2 + ATP = (4R,5S)-dethiobiotin + ADP + phosphate + 3 H(+). Its pathway is cofactor biosynthesis; biotin biosynthesis; biotin from 7,8-diaminononanoate: step 1/2. In terms of biological role, catalyzes a mechanistically unusual reaction, the ATP-dependent insertion of CO2 between the N7 and N8 nitrogen atoms of 7,8-diaminopelargonic acid (DAPA, also called 7,8-diammoniononanoate) to form a ureido ring. The sequence is that of ATP-dependent dethiobiotin synthetase BioD 1 from Escherichia coli O157:H7.